The chain runs to 788 residues: Endonuclease MutS2 (788 aa).

Residue 335 to 342 participates in ATP binding; sequence GPNTGGKT. Residues 688-708 form a disordered region; the sequence is VKSASKTKKRSGGTSITKQSA. The segment covering 699–708 has biased composition (polar residues); it reads GGTSITKQSA. A Smr domain is found at 713–788; the sequence is LDLRGVRVEE…GHGVTIIELK (76 aa).

It belongs to the DNA mismatch repair MutS family. MutS2 subfamily. In terms of assembly, homodimer. Binds to stalled ribosomes, contacting rRNA.

In terms of biological role, endonuclease that is involved in the suppression of homologous recombination and thus may have a key role in the control of bacterial genetic diversity. Its function is as follows. Acts as a ribosome collision sensor, splitting the ribosome into its 2 subunits. Detects stalled/collided 70S ribosomes which it binds and splits by an ATP-hydrolysis driven conformational change. Acts upstream of the ribosome quality control system (RQC), a ribosome-associated complex that mediates the extraction of incompletely synthesized nascent chains from stalled ribosomes and their subsequent degradation. Probably generates substrates for RQC. The chain is Endonuclease MutS2 from Exiguobacterium sibiricum (strain DSM 17290 / CCUG 55495 / CIP 109462 / JCM 13490 / 255-15).